We begin with the raw amino-acid sequence, 174 residues long: Probable adenylyl-sulfate kinase (174 aa).

Residue 10-17 coordinates ATP; it reads GPSGAGKT. Ser-84 serves as the catalytic Phosphoserine intermediate.

Belongs to the APS kinase family.

The enzyme catalyses adenosine 5'-phosphosulfate + ATP = 3'-phosphoadenylyl sulfate + ADP + H(+). It participates in sulfur metabolism; hydrogen sulfide biosynthesis; sulfite from sulfate: step 2/3. Catalyzes the synthesis of activated sulfate. The chain is Probable adenylyl-sulfate kinase (cysC) from Pyrococcus abyssi (strain GE5 / Orsay).